The chain runs to 142 residues: Transcriptional regulator MraZ (142 aa).

SpoVT-AbrB domains lie at 5–51 (ASSL…PRPE) and 77–120 (AMDV…DKAS).

The protein belongs to the MraZ family. In terms of assembly, forms oligomers.

The protein localises to the cytoplasm. It is found in the nucleoid. The polypeptide is Transcriptional regulator MraZ (Verminephrobacter eiseniae (strain EF01-2)).